The sequence spans 181 residues: Adenylate kinase (181 aa).

7-15 (GVAGVGKTT) lines the ATP pocket.

Belongs to the archaeal adenylate kinase family.

It localises to the cytoplasm. It catalyses the reaction AMP + ATP = 2 ADP. This Thermoplasma volcanium (strain ATCC 51530 / DSM 4299 / JCM 9571 / NBRC 15438 / GSS1) protein is Adenylate kinase (adkA).